The following is a 282-amino-acid chain: AB hydrolase superfamily protein FGSG_00045 (282 aa).

The span at 1–10 shows a compositional bias: polar residues; that stretch reads MAPISSTRPS. The disordered stretch occupies residues 1–22; sequence MAPISSTRPSHSIAADNPNPTT. Positions 22–270 constitute an AB hydrolase-1 domain; the sequence is TQVNFNTNMT…FADMVKRWII (249 aa).

This sequence belongs to the AB hydrolase superfamily.

The protein operates within mycotoxin biosynthesis. In terms of biological role, AB hydrolase superfamily protein; part of the gene cluster that mediates the biosynthesis of gramillins A and B, bicyclic lipopeptides that induce cell death in maize leaves but not in wheat leaves. The nonribosomal peptide synthetase GRA1 incorporates respectively a glutamic adic (Glu), a leucine (Leu), a serine (Ser), a hydroxyglutamine (HOGln), a 2-amino decanoic acid, and 2 cysteins (CysB and CysA). The biosynthesis of 2-amino decanoic acid incorporated in gramillins could be initiated by a fatty acid synthase composed of the alpha and beta subunits FGSG_00036 and FGSG_11656. The cytochrome P450 monooxygenase FGSG_15680 could hydroxylate the fatty acid chain. Subsequent oxidation to the ketone by the oxidoreductase FGSG_00048 and transamination by aminotransferase FGSG_00049 could form 2-amino-decanoic acid. On the other hand, FGSG_15680 could also be responsible for the HO-modified glutamine at the gamma-position. Whether hydroxylation occurs on the fully assembled product or on the Gln residue prior to assembly into the gramillins requires further proof. The thioredoxin FGSG_00043 could also be required for the disulfide-bond formation between CysA and CysB. The specific involvement of the remaining proteins from the cluster is more difficult to discern, but could have broader regulatory (FGSG_00040 and FGSG_11657) or enzymatic functions (FGSG_00044 and FGSG_00045). The final C-domain of GRA1 does not possess the expected sequence of a termination CT domain, often implicated in macrocyclization and release of a cyclopeptidein fungal NRPs; and the thioesterase FGSG_00047 may act in concert with the terminal C-domain of GRA1 to catalyze the formation of the macrocyclic anhydride and release of the products. In Gibberella zeae (strain ATCC MYA-4620 / CBS 123657 / FGSC 9075 / NRRL 31084 / PH-1) (Wheat head blight fungus), this protein is AB hydrolase superfamily protein FGSG_00045.